The chain runs to 376 residues: Succinyl-diaminopimelate desuccinylase (376 aa).

Residue H66 coordinates Zn(2+). D68 is an active-site residue. A Zn(2+)-binding site is contributed by D99. Residue E133 is the Proton acceptor of the active site. Zn(2+)-binding residues include E134, E162, and H348.

It belongs to the peptidase M20A family. DapE subfamily. Homodimer. The cofactor is Zn(2+). Co(2+) is required as a cofactor.

The enzyme catalyses N-succinyl-(2S,6S)-2,6-diaminopimelate + H2O = (2S,6S)-2,6-diaminopimelate + succinate. It functions in the pathway amino-acid biosynthesis; L-lysine biosynthesis via DAP pathway; LL-2,6-diaminopimelate from (S)-tetrahydrodipicolinate (succinylase route): step 3/3. Its function is as follows. Catalyzes the hydrolysis of N-succinyl-L,L-diaminopimelic acid (SDAP), forming succinate and LL-2,6-diaminopimelate (DAP), an intermediate involved in the bacterial biosynthesis of lysine and meso-diaminopimelic acid, an essential component of bacterial cell walls. This is Succinyl-diaminopimelate desuccinylase from Thioalkalivibrio sulfidiphilus (strain HL-EbGR7).